The chain runs to 634 residues: Ankyrin repeat and SOCS box protein 2 (634 aa).

Positions 26–45 (SEEELVQMAIEQSLADKTRG) constitute a UIM domain. Residues 35 to 81 (IEQSLADKTRGPTPAETSVSSQTNHQPGHIHPWTRSSSPPESPPARA) are disordered. Residues 49-60 (AETSVSSQTNHQ) show a composition bias toward polar residues. ANK repeat units follow at residues 104-133 (AAMD…NLAE), 137-167 (EGWL…TIDQ), 171-200 (QEET…EPDI), 204-233 (SRET…DANH), 237-266 (RGWT…KVEA), 270-299 (YSIT…DINT), 303-332 (DSAS…DANK), 336-365 (DGLL…RTRV), 368-397 (SGIS…DVNT), 410-439 (RRTS…DPNR), 440-469 (DVIS…NIDA), and 476-504 (TAFP…DGEP). Serine 371 bears the Phosphoserine mark. The region spanning 580–634 (EDWAVIKEKAEPPRPLAHLCRLRVRKAIGKYRIKLLDTLPLPGRLIRYLKYENTQ) is the SOCS box domain.

Belongs to the ankyrin SOCS box (ASB) family. As to quaternary structure, component of a probable ECS E3 ubiquitin-protein ligase complex which contains CUL5, either RBX1 or RNF7/RBX2, Elongin BC complex (ELOB and ELOC) and ASB2. Interacts with SKP2. Through its interaction with SKP2, likely to bridge the formation of dimeric E3-ubiquitin-protein ligase complexes composed of an ECS complex and an SCF(SKP2) complex. Interacts with JAK2; the interaction targets JAK2 for Notch-mediated proteasomal degradation. Interacts with TCF3/E2A; the interaction is mediated by SKP2 and targets TCF3 for Notch-mediated proteasomal degradation. Interacts with DES. Monoubiquitinated.

Its subcellular location is the cytoplasm. It is found in the cytoskeleton. The protein localises to the stress fiber. The protein resides in the myofibril. It localises to the sarcomere. Its subcellular location is the z line. The protein operates within protein modification; protein ubiquitination. Functionally, substrate-recognition component of a SCF-like ECS (Elongin-Cullin-SOCS-box protein) E3 ubiquitin-protein ligase complex which mediates the ubiquitination and subsequent proteasomal degradation of target proteins. Mediates Notch-induced ubiquitination and degradation of substrates including E2A and JAK2. Required during embryonic heart development for complete heart looping. Required for cardiomyocyte differentiation. Involved in myogenic differentiation and targets filamin FLNB for proteasomal degradation but not filamin FLNA. Also targets DES for proteasomal degradation. Acts as a negative regulator of skeletal muscle mass. This chain is Ankyrin repeat and SOCS box protein 2, found in Rattus norvegicus (Rat).